We begin with the raw amino-acid sequence, 66 residues long: Cytochrome c oxidase subunit 26, mitochondrial (66 aa).

The transit peptide at 1–8 (MFFSQVLR) directs the protein to the mitochondrion. At 9-27 (SSARAAPIKRYTGGRIGES) the chain is on the mitochondrial matrix side. A helical transmembrane segment spans residues 28-64 (WVITEGRRLIPEIFQWSAVLSVCLGWPGAVYFFSKAR). The Mitochondrial intermembrane portion of the chain corresponds to 65 to 66 (KA).

This sequence belongs to the fungal cytochrome c oxidase subunit 26 family. In terms of assembly, component of the cytochrome c oxidase (complex IV, CIV), a multisubunit enzyme composed of 12 subunits. The complex is composed of a catalytic core of 3 subunits COX1, COX2 and COX3, encoded in the mitochondrial DNA, and 9 supernumerary subunits COX4, COX5A (or COX5B), COX6, COX7, COX8, COX9, COX12, COX13 and COX26, which are encoded in the nuclear genome. The complex exists as a monomer or a dimer and forms supercomplexes (SCs) in the inner mitochondrial membrane with a dimer of ubiquinol-cytochrome c oxidoreductase (cytochrome b-c1 complex, complex III, CIII), resulting in 2 different assemblies (supercomplexes III(2)IV and III(2)IV(2)).

The protein localises to the mitochondrion inner membrane. Functionally, component of the cytochrome c oxidase, the last enzyme in the mitochondrial electron transport chain which drives oxidative phosphorylation. The respiratory chain contains 3 multisubunit complexes succinate dehydrogenase (complex II, CII), ubiquinol-cytochrome c oxidoreductase (cytochrome b-c1 complex, complex III, CIII) and cytochrome c oxidase (complex IV, CIV), that cooperate to transfer electrons derived from NADH and succinate to molecular oxygen, creating an electrochemical gradient over the inner membrane that drives transmembrane transport and the ATP synthase. Cytochrome c oxidase is the component of the respiratory chain that catalyzes the reduction of oxygen to water. Electrons originating from reduced cytochrome c in the intermembrane space (IMS) are transferred via the dinuclear copper A center (CU(A)) of COX2 and heme A of COX1 to the active site in COX1, a binuclear center (BNC) formed by heme A3 and copper B (CU(B)). The BNC reduces molecular oxygen to 2 water molecules using 4 electrons from cytochrome c in the IMS and 4 protons from the mitochondrial matrix. In Saccharomyces cerevisiae (strain ATCC 204508 / S288c) (Baker's yeast), this protein is Cytochrome c oxidase subunit 26, mitochondrial (COX26).